The primary structure comprises 899 residues: Solute carrier family 12 member 9 (899 aa).

Residues Met-1 to Lys-42 are Cytoplasmic-facing. Residues Leu-43–Phe-63 traverse the membrane as a helical segment. Topologically, residues Leu-64–Gly-78 are extracellular. Residues Leu-79 to Ile-99 traverse the membrane as a helical segment. The Cytoplasmic segment spans residues Ser-100–Ser-125. A helical membrane pass occupies residues Ile-126–Val-146. The Extracellular portion of the chain corresponds to Glu-147–Thr-175. A helical membrane pass occupies residues Val-176 to Ile-196. Residues Tyr-197–Ser-201 lie on the Cytoplasmic side of the membrane. The chain crosses the membrane as a helical span at residues Phe-202–Val-222. The Extracellular segment spans residues Ser-223–Thr-269. 3 N-linked (GlcNAc...) asparagine glycosylation sites follow: Asn-228, Asn-236, and Asn-249. A helical membrane pass occupies residues Met-270–Gly-290. Residues Ala-291–Lys-306 lie on the Cytoplasmic side of the membrane. Residues Gly-307–Ser-327 form a helical membrane-spanning segment. Residues Ser-328–Pro-350 are Extracellular-facing. The chain crosses the membrane as a helical span at residues Phe-351–Ala-371. Topologically, residues Ser-372–Arg-373 are cytoplasmic. Residues Ile-374–Thr-394 form a helical membrane-spanning segment. At Ser-395–Asn-399 the chain is on the extracellular side. The chain crosses the membrane as a helical span at residues Pro-400–Leu-420. Residue Asn-421 is a topological domain, cytoplasmic. A helical membrane pass occupies residues Val-422–Cys-442. Residues Leu-443–Pro-455 are Extracellular-facing. The chain crosses the membrane as a helical span at residues Thr-456 to Met-476. Topologically, residues Phe-477 to Ser-487 are extracellular. Residues Ile-488–Ile-510 form a helical membrane-spanning segment. The Cytoplasmic segment spans residues Ser-511–Gly-563. Residues Gly-564–Val-584 traverse the membrane as a helical segment. At Gln-585–Tyr-749 the chain is on the extracellular side. Residues Ala-750–Trp-770 traverse the membrane as a helical segment. Topologically, residues Arg-771–Leu-899 are cytoplasmic.

It belongs to the SLC12A transporter family.

The protein resides in the cell membrane. It is found in the lysosome membrane. Functionally, seems to correspond to a subunit of a multimeric transport system and thus, additional subunits may be required for its function. May play a role in lysosomal ion flux and osmoregulation. The sequence is that of Solute carrier family 12 member 9 (slc12a9) from Danio rerio (Zebrafish).